We begin with the raw amino-acid sequence, 99 residues long: Aspartyl/glutamyl-tRNA(Asn/Gln) amidotransferase subunit C (99 aa).

It belongs to the GatC family. Heterotrimer of A, B and C subunits.

The catalysed reaction is L-glutamyl-tRNA(Gln) + L-glutamine + ATP + H2O = L-glutaminyl-tRNA(Gln) + L-glutamate + ADP + phosphate + H(+). The enzyme catalyses L-aspartyl-tRNA(Asn) + L-glutamine + ATP + H2O = L-asparaginyl-tRNA(Asn) + L-glutamate + ADP + phosphate + 2 H(+). Its function is as follows. Allows the formation of correctly charged Asn-tRNA(Asn) or Gln-tRNA(Gln) through the transamidation of misacylated Asp-tRNA(Asn) or Glu-tRNA(Gln) in organisms which lack either or both of asparaginyl-tRNA or glutaminyl-tRNA synthetases. The reaction takes place in the presence of glutamine and ATP through an activated phospho-Asp-tRNA(Asn) or phospho-Glu-tRNA(Gln). This Mycolicibacterium smegmatis (strain ATCC 700084 / mc(2)155) (Mycobacterium smegmatis) protein is Aspartyl/glutamyl-tRNA(Asn/Gln) amidotransferase subunit C.